A 102-amino-acid chain; its full sequence is Trp operon repressor homolog (102 aa).

The DNA-binding element occupies 59–82 (QRQISQMLGVGIATITRGSNELKL).

It belongs to the TrpR family. As to quaternary structure, homodimer.

Its subcellular location is the cytoplasm. This protein is an aporepressor. When complexed with L-tryptophan it binds the operator region of the trp operon and prevents the initiation of transcription. The protein is Trp operon repressor homolog of Vibrio vulnificus (strain CMCP6).